Consider the following 236-residue polypeptide: 2-C-methyl-D-erythritol 4-phosphate cytidylyltransferase (236 aa).

The protein belongs to the IspD/TarI cytidylyltransferase family. IspD subfamily. As to quaternary structure, homodimer.

The catalysed reaction is 2-C-methyl-D-erythritol 4-phosphate + CTP + H(+) = 4-CDP-2-C-methyl-D-erythritol + diphosphate. It participates in isoprenoid biosynthesis; isopentenyl diphosphate biosynthesis via DXP pathway; isopentenyl diphosphate from 1-deoxy-D-xylulose 5-phosphate: step 2/6. Catalyzes the formation of 4-diphosphocytidyl-2-C-methyl-D-erythritol from CTP and 2-C-methyl-D-erythritol 4-phosphate (MEP). This chain is 2-C-methyl-D-erythritol 4-phosphate cytidylyltransferase, found in Enterobacter sp. (strain 638).